The chain runs to 123 residues: Thioredoxin domain-containing protein 17 (123 aa).

In terms of domain architecture, Thioredoxin spans 41-123 (SWCPDCVKAE…DLVRMMFTED (83 aa)). Active-site nucleophile residues include Cys-43 and Cys-46. Cys-43 and Cys-46 are oxidised to a cystine.

The protein belongs to the thioredoxin family.

It localises to the cytoplasm. Its function is as follows. Disulfide reductase. May participate in various redox reactions through the reversible oxidation of its active center dithiol to a disulfide and catalyze dithiol-disulfide exchange reactions. Has peroxidase activity and may contribute to the elimination of cellular hydrogen peroxide. This chain is Thioredoxin domain-containing protein 17 (txndc17), found in Danio rerio (Zebrafish).